A 417-amino-acid chain; its full sequence is Glutamyl-tRNA reductase (417 aa).

Substrate-binding positions include 49-52 (TCNR), S109, 114-116 (ESQ), and Q120. The Nucleophile role is filled by C50. 189-194 (GLGEIG) serves as a coordination point for NADP(+).

Belongs to the glutamyl-tRNA reductase family. Homodimer.

The enzyme catalyses (S)-4-amino-5-oxopentanoate + tRNA(Glu) + NADP(+) = L-glutamyl-tRNA(Glu) + NADPH + H(+). Its pathway is porphyrin-containing compound metabolism; protoporphyrin-IX biosynthesis; 5-aminolevulinate from L-glutamyl-tRNA(Glu): step 1/2. Its function is as follows. Catalyzes the NADPH-dependent reduction of glutamyl-tRNA(Glu) to glutamate 1-semialdehyde (GSA). This is Glutamyl-tRNA reductase from Streptococcus sanguinis (strain SK36).